The sequence spans 428 residues: Adenylosuccinate synthetase (428 aa).

Residues 11–17 (GDEGKGK) and 39–41 (GHT) each bind GTP. Asp-12 serves as the catalytic Proton acceptor. The Mg(2+) site is built by Asp-12 and Gly-39. IMP contacts are provided by residues 12–15 (DEGK), 37–40 (NAGH), Thr-130, Arg-144, Asn-226, Thr-241, and Arg-305. The active-site Proton donor is the His-40. 301–307 (VTTGRKR) contacts substrate. Residues Arg-307, 333–335 (KLD), and 415–417 (GTG) contribute to the GTP site.

The protein belongs to the adenylosuccinate synthetase family. Homodimer. It depends on Mg(2+) as a cofactor.

The protein resides in the cytoplasm. It carries out the reaction IMP + L-aspartate + GTP = N(6)-(1,2-dicarboxyethyl)-AMP + GDP + phosphate + 2 H(+). It functions in the pathway purine metabolism; AMP biosynthesis via de novo pathway; AMP from IMP: step 1/2. Its function is as follows. Plays an important role in the de novo pathway and in the salvage pathway of purine nucleotide biosynthesis. Catalyzes the first committed step in the biosynthesis of AMP from IMP. The polypeptide is Adenylosuccinate synthetase (Candida tropicalis (strain ATCC MYA-3404 / T1) (Yeast)).